We begin with the raw amino-acid sequence, 404 residues long: Indole-3-acetate O-methyltransferase 1 (404 aa).

Residues 82–83, asparagine 88, aspartate 120, 169–171, and 186–188 contribute to the S-adenosyl-L-methionine site; these read GC, TFY, and TFS. Positions 208, 212, 294, 295, 297, and 298 each coordinate Mg(2+).

This sequence belongs to the methyltransferase superfamily. SABATH family. Homodimer. Mg(2+) serves as cofactor. As to expression, expressed in roots and panicles.

It catalyses the reaction (indol-3-yl)acetate + S-adenosyl-L-methionine = methyl (indol-3-yl)acetate + S-adenosyl-L-homocysteine. Its function is as follows. Catalyzes the methylation of the free carboxyl end of the plant hormone indole-3-acetic acid (IAA). Converts IAA to IAA methyl ester (MeIAA). Regulates IAA activities by IAA methylation. Methylation of IAA plays an important role in regulating plant development and auxin homeostasis. MeIAA seems to be an inactive form of IAA. The polypeptide is Indole-3-acetate O-methyltransferase 1 (IAMT1) (Oryza sativa subsp. japonica (Rice)).